The chain runs to 407 residues: 1-deoxy-D-xylulose 5-phosphate reductoisomerase (407 aa).

NADPH-binding residues include Thr27, Gly28, Ser29, Ile30, Ala53, Arg54, Asn55, and Asn140. 1-deoxy-D-xylulose 5-phosphate is bound at residue Lys141. Glu142 is an NADPH binding site. Position 166 (Asp166) interacts with Mn(2+). 1-deoxy-D-xylulose 5-phosphate contacts are provided by Ser167, Glu168, Ser192, and His215. Glu168 contacts Mn(2+). Gly221 provides a ligand contact to NADPH. Positions 228, 233, 234, and 237 each coordinate 1-deoxy-D-xylulose 5-phosphate. A Mn(2+)-binding site is contributed by Glu237.

Belongs to the DXR family. It depends on Mg(2+) as a cofactor. Mn(2+) serves as cofactor.

It carries out the reaction 2-C-methyl-D-erythritol 4-phosphate + NADP(+) = 1-deoxy-D-xylulose 5-phosphate + NADPH + H(+). The protein operates within isoprenoid biosynthesis; isopentenyl diphosphate biosynthesis via DXP pathway; isopentenyl diphosphate from 1-deoxy-D-xylulose 5-phosphate: step 1/6. Functionally, catalyzes the NADPH-dependent rearrangement and reduction of 1-deoxy-D-xylulose-5-phosphate (DXP) to 2-C-methyl-D-erythritol 4-phosphate (MEP). This is 1-deoxy-D-xylulose 5-phosphate reductoisomerase from Oleidesulfovibrio alaskensis (strain ATCC BAA-1058 / DSM 17464 / G20) (Desulfovibrio alaskensis).